Consider the following 168-residue polypeptide: uncharacterized protein (168 aa).

Residues 1 to 15 show a composition bias toward low complexity; that stretch reads MKRIISSSKSLKQLS. Residues 1-107 form a disordered region; the sequence is MKRIISSSKS…NNNNNNNNNN (107 aa). A compositionally biased stretch (acidic residues) spans 33-47; sequence SDSDSDSDSDSDSDS. Over residues 48–107 the composition is skewed to low complexity; the sequence is DSNSNSNSNSNSNSNSNSNSNSNSNSNNNNNNTNNNNNNNNNNNNNNNNNNNNNNNNNNN.

This is an uncharacterized protein from Dictyostelium discoideum (Social amoeba).